Here is a 340-residue protein sequence, read N- to C-terminus: N-acetyl-gamma-glutamyl-phosphate reductase (340 aa).

The active site involves cysteine 149.

This sequence belongs to the NAGSA dehydrogenase family. Type 1 subfamily.

The protein resides in the cytoplasm. It catalyses the reaction N-acetyl-L-glutamate 5-semialdehyde + phosphate + NADP(+) = N-acetyl-L-glutamyl 5-phosphate + NADPH + H(+). It participates in amino-acid biosynthesis; L-arginine biosynthesis; N(2)-acetyl-L-ornithine from L-glutamate: step 3/4. In terms of biological role, catalyzes the NADPH-dependent reduction of N-acetyl-5-glutamyl phosphate to yield N-acetyl-L-glutamate 5-semialdehyde. This chain is N-acetyl-gamma-glutamyl-phosphate reductase, found in Vesicomyosocius okutanii subsp. Calyptogena okutanii (strain HA).